Reading from the N-terminus, the 530-residue chain is Phosphoenolpyruvate carboxykinase (ATP) 2 (530 aa).

Residues R54, Y191, and K197 each contribute to the substrate site. ATP contacts are provided by residues K197, H216, and 232 to 240; that span reads GLSGTGKTT. Residues K197 and H216 each contribute to the Mn(2+) site. D253 is a binding site for Mn(2+). Residues E281, R318, 437–438, and T443 contribute to the ATP site; that span reads RV. A substrate-binding site is contributed by R318.

This sequence belongs to the phosphoenolpyruvate carboxykinase (ATP) family. It depends on Mn(2+) as a cofactor.

The protein localises to the cytoplasm. The enzyme catalyses oxaloacetate + ATP = phosphoenolpyruvate + ADP + CO2. The protein operates within carbohydrate biosynthesis; gluconeogenesis. Its function is as follows. Involved in the gluconeogenesis. Catalyzes the conversion of oxaloacetate (OAA) to phosphoenolpyruvate (PEP) through direct phosphoryl transfer between the nucleoside triphosphate and OAA. The sequence is that of Phosphoenolpyruvate carboxykinase (ATP) 2 from Salinibacter ruber (strain DSM 13855 / M31).